Here is a 298-residue protein sequence, read N- to C-terminus: Cyclin-dependent kinase 1 (298 aa).

At serine 2 the chain carries N-acetylserine. One can recognise a Protein kinase domain in the interval 8–295 (YKRLEKVGEG…ARRAAIHPYF (288 aa)). ATP contacts are provided by residues 14–22 (VGEGTYGVV) and lysine 40. Tyrosine 19 is modified (phosphotyrosine). The active-site Proton acceptor is the aspartate 136. Phosphothreonine is present on threonine 169.

Belongs to the protein kinase superfamily. CMGC Ser/Thr protein kinase family. CDC2/CDKX subfamily. Forms a stable but non-covalent complex with the CKS1 protein and with a cyclin.

The catalysed reaction is L-seryl-[protein] + ATP = O-phospho-L-seryl-[protein] + ADP + H(+). It carries out the reaction L-threonyl-[protein] + ATP = O-phospho-L-threonyl-[protein] + ADP + H(+). With respect to regulation, phosphorylation at Thr-18 or Tyr-19 inactivates the enzyme, while phosphorylation at Thr-169 activates it. Its function is as follows. Cyclin-dependent kinase that acts as a master regulator of the mitotic and meiotic cell cycles. Required to drive the G1-S transition. More than 200 substrates have been identified. Substrate specificity is in part regulated by the bound cyclin protein. Phosphorylates YTA7 during S-phase to promote transcription of histones. May phosphorylate CNN1, to contribute to the enrichment of CNN1 on anaphase kinetochores. In Saccharomyces cerevisiae (strain ATCC 204508 / S288c) (Baker's yeast), this protein is Cyclin-dependent kinase 1.